Consider the following 394-residue polypeptide: Elongation factor Tu (394 aa).

Positions 10–204 (KPHVNIGTIG…AVDEYIPTPD (195 aa)) constitute a tr-type G domain. The tract at residues 19–26 (GHIDHGKT) is G1. 19–26 (GHIDHGKT) is a GTP binding site. Thr-26 is a Mg(2+) binding site. The G2 stretch occupies residues 60 to 64 (GITIN). The interval 81 to 84 (DCPG) is G3. GTP is bound by residues 81-85 (DCPGH) and 136-139 (NKCD). Positions 136–139 (NKCD) are G4. The interval 174–176 (SAL) is G5.

This sequence belongs to the TRAFAC class translation factor GTPase superfamily. Classic translation factor GTPase family. EF-Tu/EF-1A subfamily. Monomer.

It localises to the cytoplasm. It catalyses the reaction GTP + H2O = GDP + phosphate + H(+). GTP hydrolase that promotes the GTP-dependent binding of aminoacyl-tRNA to the A-site of ribosomes during protein biosynthesis. This is Elongation factor Tu from Mycoplasmoides gallisepticum (strain R(low / passage 15 / clone 2)) (Mycoplasma gallisepticum).